A 53-amino-acid polypeptide reads, in one-letter code: IgA-inducing protein homolog (53 aa).

The first 30 residues, 1–30 (MCSYYHMKKRSVSGCNITIFAVMFSHLSAG), serve as a signal peptide directing secretion.

The protein resides in the secreted. In terms of biological role, enhances IgA secretion from B-cells stimulated via CD40. This chain is IgA-inducing protein homolog (IGIP), found in Homo sapiens (Human).